The primary structure comprises 354 residues: D-alanine--D-alanine ligase (354 aa).

The ATP-grasp domain occupies 154–348; sequence RSWFLTNNIN…FTNLIEEIIK (195 aa). Residue 181–232 coordinates ATP; the sequence is MKRPYVIKPITQGSSIGIEVIFEEDDFNFANYDFPYGDQVIIEKYIKGRELQ. Mg(2+) contacts are provided by Glu-301, Glu-315, and Asn-317.

Belongs to the D-alanine--D-alanine ligase family. It depends on Mg(2+) as a cofactor. Requires Mn(2+) as cofactor.

The protein localises to the cytoplasm. It catalyses the reaction 2 D-alanine + ATP = D-alanyl-D-alanine + ADP + phosphate + H(+). The protein operates within cell wall biogenesis; peptidoglycan biosynthesis. In terms of biological role, cell wall formation. The polypeptide is D-alanine--D-alanine ligase (Rickettsia canadensis (strain McKiel)).